An 89-amino-acid chain; its full sequence is Small ribosomal subunit protein bS20 (89 aa).

Positions 1–27 (MANIKSAKKDSIISEERRKKNASQRSK) are disordered. A compositionally biased stretch (basic and acidic residues) spans 7-18 (AKKDSIISEERR).

This sequence belongs to the bacterial ribosomal protein bS20 family.

In terms of biological role, binds directly to 16S ribosomal RNA. This is Small ribosomal subunit protein bS20 from Buchnera aphidicola subsp. Schizaphis graminum (strain Sg).